We begin with the raw amino-acid sequence, 498 residues long: Dynein regulatory complex subunit 2 (498 aa).

Coiled-coil stretches lie at residues 98–160 (VIKS…RKTI), 250–311 (KDEK…KAQR), and 417–441 (SLRHRRAQLLEINEKLREMLRQYLD).

It belongs to the DRC2 family. In terms of assembly, component of the nexin-dynein regulatory complex (N-DRC). Interacts with DRC1.

The protein resides in the cytoplasm. The protein localises to the cytoskeleton. It is found in the flagellum basal body. Its subcellular location is the cell projection. It localises to the cilium. The protein resides in the flagellum. The protein localises to the flagellum axoneme. Component of the nexin-dynein regulatory complex (N-DRC), a key regulator of ciliary/flagellar motility which maintains the alignment and integrity of the distal axoneme and regulates microtubule sliding in motile axonemes. Plays a critical role in the assembly of N-DRC and also stabilizes the assembly of multiple inner dynein arms and radial spokes. Coassembles with DRC1 to form a central scaffold needed for assembly of the N-DRC and its attachment to the outer doublet microtubules. The protein is Dynein regulatory complex subunit 2 (CCDC65) of Bos taurus (Bovine).